We begin with the raw amino-acid sequence, 441 residues long: Ribulose bisphosphate carboxylase large chain (441 aa).

Lys5 carries the post-translational modification N6,N6,N6-trimethyllysine. Thr164 serves as a coordination point for substrate. Lys166 (proton acceptor) is an active-site residue. Residue Lys168 participates in substrate binding. Positions 192, 194, and 195 each coordinate Mg(2+). An N6-carboxylysine modification is found at Lys192. The active-site Proton acceptor is the His285. Positions 286, 318, and 370 each coordinate substrate.

The protein belongs to the RuBisCO large chain family. Type I subfamily. Heterohexadecamer of 8 large chains and 8 small chains; disulfide-linked. The disulfide link is formed within the large subunit homodimers. Mg(2+) is required as a cofactor. The disulfide bond which can form in the large chain dimeric partners within the hexadecamer appears to be associated with oxidative stress and protein turnover.

Its subcellular location is the plastid. It is found in the chloroplast. The catalysed reaction is 2 (2R)-3-phosphoglycerate + 2 H(+) = D-ribulose 1,5-bisphosphate + CO2 + H2O. It catalyses the reaction D-ribulose 1,5-bisphosphate + O2 = 2-phosphoglycolate + (2R)-3-phosphoglycerate + 2 H(+). In terms of biological role, ruBisCO catalyzes two reactions: the carboxylation of D-ribulose 1,5-bisphosphate, the primary event in carbon dioxide fixation, as well as the oxidative fragmentation of the pentose substrate in the photorespiration process. Both reactions occur simultaneously and in competition at the same active site. The polypeptide is Ribulose bisphosphate carboxylase large chain (Hemionitis engywookii (Fendler's false cloak fern)).